The primary structure comprises 206 residues: Small ribosomal subunit protein uS4 (206 aa).

In terms of domain architecture, S4 RNA-binding spans 96 to 161 (RRLDNVVYRM…QGRIQAALAL (66 aa)).

This sequence belongs to the universal ribosomal protein uS4 family. Part of the 30S ribosomal subunit. Contacts protein S5. The interaction surface between S4 and S5 is involved in control of translational fidelity.

One of the primary rRNA binding proteins, it binds directly to 16S rRNA where it nucleates assembly of the body of the 30S subunit. In terms of biological role, with S5 and S12 plays an important role in translational accuracy. The polypeptide is Small ribosomal subunit protein uS4 (Legionella pneumophila (strain Paris)).